A 154-amino-acid polypeptide reads, in one-letter code: NADPH-dependent 7-cyano-7-deazaguanine reductase (154 aa).

Residues 1-23 are compositionally biased toward polar residues; that stretch reads MPNTDVSSLSMLGQQTETAQSPE. A disordered region spans residues 1-26; sequence MPNTDVSSLSMLGQQTETAQSPEQAV. Residue Cys52 is the Thioimide intermediate of the active site. Catalysis depends on Asp59, which acts as the Proton donor. Residues 74–76 and 93–94 contribute to the substrate site; these read VES and HE.

The protein belongs to the GTP cyclohydrolase I family. QueF type 1 subfamily.

It localises to the cytoplasm. It catalyses the reaction 7-aminomethyl-7-carbaguanine + 2 NADP(+) = 7-cyano-7-deazaguanine + 2 NADPH + 3 H(+). Its pathway is tRNA modification; tRNA-queuosine biosynthesis. Functionally, catalyzes the NADPH-dependent reduction of 7-cyano-7-deazaguanine (preQ0) to 7-aminomethyl-7-deazaguanine (preQ1). This Rhizobium leguminosarum bv. trifolii (strain WSM2304) protein is NADPH-dependent 7-cyano-7-deazaguanine reductase.